The chain runs to 395 residues: Transcription termination/antitermination protein NusA (395 aa).

In terms of domain architecture, S1 motif spans 137–201 (NSVLMGQVIL…TKKGLLLELS (65 aa)). KH domains lie at 243-291 (SHNA…TLAL) and 331-378 (KVRL…NESE).

It belongs to the NusA family. In terms of assembly, monomer. Binds directly to the core enzyme of the DNA-dependent RNA polymerase and to nascent RNA.

It is found in the cytoplasm. In terms of biological role, participates in both transcription termination and antitermination. This is Transcription termination/antitermination protein NusA from Helicobacter pylori (strain ATCC 700392 / 26695) (Campylobacter pylori).